Here is a 582-residue protein sequence, read N- to C-terminus: Membrane protein insertase YidC (582 aa).

The next 4 membrane-spanning stretches (helical) occupy residues 4 to 24, 376 to 396, 446 to 466, and 542 to 562; these read NTVL…YIQQ, IIPN…IIFF, ASGC…FGLF, and FMPL…LLFW.

Belongs to the OXA1/ALB3/YidC family. Type 1 subfamily. In terms of assembly, interacts with the Sec translocase complex via SecD. Specifically interacts with transmembrane segments of nascent integral membrane proteins during membrane integration.

The protein resides in the cell inner membrane. Its function is as follows. Required for the insertion and/or proper folding and/or complex formation of integral membrane proteins into the membrane. Involved in integration of membrane proteins that insert both dependently and independently of the Sec translocase complex, as well as at least some lipoproteins. Aids folding of multispanning membrane proteins. The protein is Membrane protein insertase YidC of Treponema denticola (strain ATCC 35405 / DSM 14222 / CIP 103919 / JCM 8153 / KCTC 15104).